The following is a 95-amino-acid chain: Putative membrane protein insertion efficiency factor (95 aa).

A disordered region spans residues 72-95 (FDPVPDAPTSPSPSSSCSCKGPHP). Residues 83-95 (SPSSSCSCKGPHP) are compositionally biased toward low complexity.

The protein belongs to the UPF0161 family.

The protein resides in the cell inner membrane. Functionally, could be involved in insertion of integral membrane proteins into the membrane. The chain is Putative membrane protein insertion efficiency factor from Xanthomonas axonopodis pv. citri (strain 306).